A 155-amino-acid polypeptide reads, in one-letter code: Transcriptional repressor NrdR (155 aa).

Residues 3–34 fold into a zinc finger; sequence CPFCSHFESKVVDSRPTDEGQAIRRRRECVSC. An ATP-cone domain is found at 49 to 139; it reads LIVVKKSGNR…VYREFKDINT (91 aa).

This sequence belongs to the NrdR family. Zn(2+) serves as cofactor.

In terms of biological role, negatively regulates transcription of bacterial ribonucleotide reductase nrd genes and operons by binding to NrdR-boxes. The polypeptide is Transcriptional repressor NrdR (Alkaliphilus metalliredigens (strain QYMF)).